The following is a 980-amino-acid chain: Glutamate receptor ionotropic, kainate 5 (980 aa).

The N-terminal stretch at 1–14 (MPAELLLLLIVAFA) is a signal peptide. Residues 15–544 (SPSCQVLSSL…YFSFLDPFSP (530 aa)) are Extracellular-facing. 3 cysteine pairs are disulfide-bonded: Cys36–Cys292, Cys83–Cys334, and Cys165–Cys170. N-linked (GlcNAc...) asparagine glycans are attached at residues Asn219, Asn271, Asn285, Asn322, Asn372, Asn394, Asn400, Asn407, Asn414, and Asn478. The helical transmembrane segment at 545–565 (AVWLFMLLAYLAVSCVLFLAA) threads the bilayer. The Cytoplasmic portion of the chain corresponds to 566–622 (RLSPYEWYNPHPCLRARPHILENQYTLGNSLWFPVGGFMQQGSEIMPRALSTRCVSG). A helical membrane pass occupies residues 623–643 (VWWAFTLIIISSYTANLAAFL). Topologically, residues 644–803 (TVQRMEVPVE…HRAKGLGMEN (160 aa)) are extracellular. An N-linked (GlcNAc...) asparagine glycan is attached at Asn735. The helical transmembrane segment at 804–824 (IGGIFIVLICGLIIAVFVAVM) threads the bilayer. Over 825 to 980 (EFIWSTRRSA…AGPRELAEHE (156 aa)) the chain is Cytoplasmic. Disordered stretches follow at residues 891–927 (YSAGAGGDAGSAHGGPQRLLDDPGPPSGARPAAPTPC) and 944–980 (ASGAGAPPRGLGVPAEATSPPRPRPGPAGPRELAEHE). Positions 894 to 903 (GAGGDAGSAH) are enriched in gly residues.

Belongs to the glutamate-gated ion channel (TC 1.A.10.1) family. GRIK5 subfamily. As to quaternary structure, homotetramer. Heterotetramer with GRIK2. Can form functional heteromeric receptors with GRIK1 and GRIK2. Can form functional heteromeric receptors with GRIK3.

The protein localises to the cell membrane. It is found in the postsynaptic cell membrane. The protein resides in the presynaptic cell membrane. Its function is as follows. Ionotropic glutamate receptor that functions as a cation-permeable ligand-gated ion channel, gated by L-glutamate and the glutamatergic agonist kainic acid. Cannot form functional channels on its own and produces channel activity only in heteromeric assembly with GRIK1 and GRIK2 subunits. Can form functional heteromeric receptors with GRIK3. The protein is Glutamate receptor ionotropic, kainate 5 (GRIK5) of Homo sapiens (Human).